The sequence spans 97 residues: Large ribosomal subunit protein bL28 (97 aa).

The interval 1-20 (MSRRCELTAKGPQVGHKVSH) is disordered.

Belongs to the bacterial ribosomal protein bL28 family.

The protein is Large ribosomal subunit protein bL28 of Afipia carboxidovorans (strain ATCC 49405 / DSM 1227 / KCTC 32145 / OM5) (Oligotropha carboxidovorans).